A 187-amino-acid polypeptide reads, in one-letter code: Threonylcarbamoyl-AMP synthase (187 aa).

In terms of domain architecture, YrdC-like spans 4-187 (ILTLDNAVAT…DARSGQILRD (184 aa)).

Belongs to the SUA5 family. TsaC subfamily.

Its subcellular location is the cytoplasm. The enzyme catalyses L-threonine + hydrogencarbonate + ATP = L-threonylcarbamoyladenylate + diphosphate + H2O. Required for the formation of a threonylcarbamoyl group on adenosine at position 37 (t(6)A37) in tRNAs that read codons beginning with adenine. Catalyzes the conversion of L-threonine, HCO(3)(-)/CO(2) and ATP to give threonylcarbamoyl-AMP (TC-AMP) as the acyladenylate intermediate, with the release of diphosphate. This chain is Threonylcarbamoyl-AMP synthase, found in Xanthomonas oryzae pv. oryzae (strain MAFF 311018).